A 460-amino-acid chain; its full sequence is GTPase Der (460 aa).

EngA-type G domains follow at residues 2-164 and 196-368; these read QSII…HEEF and IRVG…ENFT. Residues 8 to 15, 55 to 59, 116 to 119, 202 to 209, 249 to 253, and 313 to 316 contribute to the GTP site; these read GKPNVGKS, DSGGL, NKVD, GRVNVGKS, DTAGI, and NKWD. The KH-like domain maps to 369-453; the sequence is QKIQTSKLNT…PLVIASRKKG (85 aa).

The protein belongs to the TRAFAC class TrmE-Era-EngA-EngB-Septin-like GTPase superfamily. EngA (Der) GTPase family. In terms of assembly, associates with the 50S ribosomal subunit.

Its function is as follows. GTPase that plays an essential role in the late steps of ribosome biogenesis. This is GTPase Der from Campylobacter jejuni subsp. jejuni serotype O:2 (strain ATCC 700819 / NCTC 11168).